We begin with the raw amino-acid sequence, 264 residues long: Type III pantothenate kinase 2 (264 aa).

6-13 contacts ATP; it reads DVGNTFTV. Residues Tyr-100 and 107 to 110 contribute to the substrate site; that span reads GADR. The active-site Proton acceptor is the Asp-109. Asp-129 lines the K(+) pocket. Residue Thr-132 participates in ATP binding. Residue Thr-184 participates in substrate binding.

It belongs to the type III pantothenate kinase family. As to quaternary structure, homodimer. NH4(+) is required as a cofactor. The cofactor is K(+).

It is found in the cytoplasm. The catalysed reaction is (R)-pantothenate + ATP = (R)-4'-phosphopantothenate + ADP + H(+). It participates in cofactor biosynthesis; coenzyme A biosynthesis; CoA from (R)-pantothenate: step 1/5. In terms of biological role, catalyzes the phosphorylation of pantothenate (Pan), the first step in CoA biosynthesis. The protein is Type III pantothenate kinase 2 of Symbiobacterium thermophilum (strain DSM 24528 / JCM 14929 / IAM 14863 / T).